We begin with the raw amino-acid sequence, 1087 residues long: 2'-5'-oligoadenylate synthase 3 (1087 aa).

Residue Met1 is modified to N-acetylmethionine. The tract at residues 6-343 (TPAAALDRFV…GDPVQSWKGP (338 aa)) is OAS domain 1. Interaction with dsRNA stretches follow at residues 12-57 (DRFV…VLKT) and 186-200 (ELRR…AKLK). The tract at residues 344-410 (GLPRAGCSGL…VPGMALDLSQ (67 aa)) is linker. Phosphothreonine is present on Thr365. 2 OAS domain regions span residues 411–742 (IPTK…PWDV) and 750–1084 (TPAG…WPVK). Ser804 serves as a coordination point for ATP. 3 residues coordinate Mg(2+): Asp816, Asp818, and Asp888. The ATP site is built by Arg947, Lys950, and Gln969.

It belongs to the 2-5A synthase family. In terms of assembly, monomer. Mg(2+) serves as cofactor. In terms of tissue distribution, present at high level in placenta trophoblast.

The protein resides in the cytoplasm. It localises to the nucleus. The enzyme catalyses 3 ATP = 5'-triphosphoadenylyl-(2'-&gt;5')-adenylyl-(2'-&gt;5')-adenosine + 2 diphosphate. Its activity is regulated as follows. Produced as a latent enzyme which is activated by dsRNA generated during the course of viral infection. Strongly activated by long dsRNAs at least 50 nucleotides in length. ssRNA does not activate the enzyme. Its function is as follows. Interferon-induced, dsRNA-activated antiviral enzyme which plays a critical role in cellular innate antiviral response. In addition, it may also play a role in other cellular processes such as apoptosis, cell growth, differentiation and gene regulation. Synthesizes preferentially dimers of 2'-5'-oligoadenylates (2-5A) from ATP which then bind to the inactive monomeric form of ribonuclease L (RNase L) leading to its dimerization and subsequent activation. Activation of RNase L leads to degradation of cellular as well as viral RNA, resulting in the inhibition of protein synthesis, thus terminating viral replication. Can mediate the antiviral effect via the classical RNase L-dependent pathway or an alternative antiviral pathway independent of RNase L. Displays antiviral activity against Chikungunya virus (CHIKV), Dengue virus, Sindbis virus (SINV) and Semliki forest virus (SFV). This is 2'-5'-oligoadenylate synthase 3 (OAS3) from Homo sapiens (Human).